The following is a 311-amino-acid chain: Probable manganese-dependent inorganic pyrophosphatase (311 aa).

Positions 9, 13, 15, 77, 99, and 151 each coordinate Mn(2+).

The protein belongs to the PPase class C family. It depends on Mn(2+) as a cofactor.

It localises to the cytoplasm. The catalysed reaction is diphosphate + H2O = 2 phosphate + H(+). The chain is Probable manganese-dependent inorganic pyrophosphatase from Streptococcus pneumoniae (strain JJA).